The sequence spans 719 residues: MFVGVARHSGSQDEVSRGVEPLEAARAQPAKDRRAKGTPKSSKPGKKHRYLRLLPEALIRFGGFRKRKKAKSSVSKKPGEVDDSLEQPCGLGCLVSTCCECCNNIRCFMIFYCILLICQGVVFGLIDVSIGDFQKEYQLKTIEKLALEKSYDISSGLVAIFIAFYGDRKKVIWFVASSFLIGLGSLLCAFPSINEENKQSKVGIEDICEEIKVVSGCQSSGISFQSKYLSFFILGQTVQGIAGMPLYILGITFIDENVATHSAGIYLGIAECTSMIGYALGYVLGAPLVKVPENTTSATNTTVNNGSPEWLWTWWINFLFAAVVAWCTLIPLSCFPNNMPGSTRIKARKRKQLHFFDSRLKDLKLGTNIKDLCAALWILMKNPVLICLALSKATEYLVIIGASEFLPIYLENQFILTPTVATTLAGLVLIPGGALGQLLGGVIVSTLEMSCKALMRFIMVTSVISLILLVFIIFVRCNPVQFAGINEDYDGTGKLGNLTAPCNEKCRCSSSIYSSICGRDDIEYFSPCFAGCTYSKAQNQKKMYYNCSCIKEGLITADAEGDFIDARPGKCDAKCYKLPLFIAFIFSTLIFSGFSGVPIVLAMTRVVPDKLRSLALGVSYVILRIFGTIPGPSIFKMSGETSCILRDVNKCGHTGRCWIYNKTKMAFLLVGICFLCKLCTIIFTTIAFFIYKRRLNENTDFPDVTVKNPKVKKKEETDL.

The segment at M1–K46 is disordered. Over M1–R106 the chain is Cytoplasmic. Basic residues predominate over residues R33–K46. A helical transmembrane segment spans residues C107–I126. Residues D127–L145 lie on the Extracellular side of the membrane. A helical transmembrane segment spans residues A146–G166. The Cytoplasmic portion of the chain corresponds to D167–V171. A helical membrane pass occupies residues I172–E196. Topologically, residues N197–S223 are extracellular. The helical transmembrane segment at F224 to I254 threads the bilayer. At D255–S274 the chain is on the cytoplasmic side. The chain crosses the membrane as a helical span at residues M275–T295. The Extracellular portion of the chain corresponds to T296 to L311. Residue N300 is glycosylated (N-linked (GlcNAc...) asparagine). A helical membrane pass occupies residues W312–P336. Residues N337–I378 lie on the Cytoplasmic side of the membrane. The helical transmembrane segment at L379–I400 threads the bilayer. At G401–V420 the chain is on the extracellular side. A helical transmembrane segment spans residues A421–V444. Topologically, residues S445–E448 are cytoplasmic. A helical membrane pass occupies residues M449–I472. Residues I473–F581 lie on the Extracellular side of the membrane. The 56-residue stretch at G496–K551 folds into the Kazal-like domain. N497 carries N-linked (GlcNAc...) asparagine glycosylation. Disulfide bonds link C502–C532, C508–C528, and C517–C549. N-linked (GlcNAc...) asparagine glycosylation occurs at N546. The helical transmembrane segment at I582 to T604 threads the bilayer. Topologically, residues R605–S613 are cytoplasmic. The chain crosses the membrane as a helical span at residues L614–G639. The Extracellular portion of the chain corresponds to E640–C673. N661 is a glycosylation site (N-linked (GlcNAc...) asparagine). The helical transmembrane segment at F674–Y691 threads the bilayer. The Cytoplasmic segment spans residues K692 to L719.

This sequence belongs to the organo anion transporter (TC 2.A.60) family. In terms of tissue distribution, strongly expressed in testis. Weakly expressed in spleen, brain, fetal brain and placenta. Detected in lung tumors.

It localises to the cell membrane. This is Solute carrier organic anion transporter family member 6A1 (SLCO6A1) from Homo sapiens (Human).